The chain runs to 223 residues: Urease accessory protein UreF (223 aa).

This sequence belongs to the UreF family. UreD, UreF and UreG form a complex that acts as a GTP-hydrolysis-dependent molecular chaperone, activating the urease apoprotein by helping to assemble the nickel containing metallocenter of UreC. The UreE protein probably delivers the nickel.

The protein resides in the cytoplasm. In terms of biological role, required for maturation of urease via the functional incorporation of the urease nickel metallocenter. In Agrobacterium fabrum (strain C58 / ATCC 33970) (Agrobacterium tumefaciens (strain C58)), this protein is Urease accessory protein UreF.